A 132-amino-acid polypeptide reads, in one-letter code: MAKLSTDELLEAFKDLTLIELSEFVKKFEETFEVTAAAPPVAVAAAPAAGGAGAAAEDAEQKDSFDIVLESVDASKKIQVIKEVRALTSLGLGEAKALVDGAPSTVLEGANKEAADKAKTQLEGAGGTINLK.

The segment at 112 to 132 (KEAADKAKTQLEGAGGTINLK) is disordered.

It belongs to the bacterial ribosomal protein bL12 family. As to quaternary structure, homodimer. Part of the ribosomal stalk of the 50S ribosomal subunit. Forms a multimeric L10(L12)X complex, where L10 forms an elongated spine to which 2 to 4 L12 dimers bind in a sequential fashion. Binds GTP-bound translation factors.

Forms part of the ribosomal stalk which helps the ribosome interact with GTP-bound translation factors. Is thus essential for accurate translation. The chain is Large ribosomal subunit protein bL12 from Leifsonia xyli subsp. xyli (strain CTCB07).